We begin with the raw amino-acid sequence, 216 residues long: Ribosomal RNA small subunit methyltransferase G (216 aa).

S-adenosyl-L-methionine is bound by residues G86, L91, V137 to E138, and R155.

The protein belongs to the methyltransferase superfamily. RNA methyltransferase RsmG family.

It is found in the cytoplasm. It carries out the reaction guanosine(527) in 16S rRNA + S-adenosyl-L-methionine = N(7)-methylguanosine(527) in 16S rRNA + S-adenosyl-L-homocysteine. Its function is as follows. Specifically methylates the N7 position of guanine in position 527 of 16S rRNA. This Lawsonia intracellularis (strain PHE/MN1-00) protein is Ribosomal RNA small subunit methyltransferase G.